A 328-amino-acid polypeptide reads, in one-letter code: Malate dehydrogenase (328 aa).

16–22 contributes to the NAD(+) binding site; sequence GAAGQIS. 2 residues coordinate substrate: arginine 97 and arginine 103. NAD(+) is bound by residues asparagine 110, glutamine 117, and 134 to 136; that span reads VGN. Substrate is bound by residues asparagine 136 and arginine 167. Residue histidine 192 is the Proton acceptor of the active site.

This sequence belongs to the LDH/MDH superfamily. MDH type 2 family. Homotetramer.

The enzyme catalyses (S)-malate + NAD(+) = oxaloacetate + NADH + H(+). With respect to regulation, citrate activates the enzyme in the oxidation of malate to oxaloacetate and inhibits it in the reverse reaction. In terms of biological role, catalyzes the reversible oxidation of malate to oxaloacetate. Exhibits higher catalytic efficiency for oxaloacetate reduction than for malate oxidation in vitro. Almost equally active both for NADH and NADPH on the bases of the kcat values at pH 6.5, but catalytic efficiency for oxaloacetate reduction is 50-fold higher with NADH. This is Malate dehydrogenase from Corynebacterium glutamicum (strain ATCC 13032 / DSM 20300 / JCM 1318 / BCRC 11384 / CCUG 27702 / LMG 3730 / NBRC 12168 / NCIMB 10025 / NRRL B-2784 / 534).